A 322-amino-acid chain; its full sequence is Probable heme-iron transport system permease protein IsdF (322 aa).

9 helical membrane passes run 9–29, 61–81, 89–109, 114–134, 143–163, 179–199, 233–253, 267–287, and 294–314; these read LLFLCLLVILIATAYISFVTG, ILIALMVGAMLAVSGALLQAA, ANIIGVSSGALIMRALCMLFI, FYLPLLSFIGGLIPFLIIILL, VSMILVGVALFVLLNGVLEIL, IWSDVYILAVSALLGLILTLL, VFLASATVAIVGQLAFLGIIV, VLIPFSTVIGAWLLLVADLLG, and LEIPANAILMIVGGPMLIYLI.

Belongs to the binding-protein-dependent transport system permease family. FecCD subfamily.

The protein resides in the cell membrane. In terms of biological role, part of the binding-protein-dependent transport system for heme-iron. Responsible for the translocation of the substrate across the membrane. This chain is Probable heme-iron transport system permease protein IsdF (isdF), found in Staphylococcus aureus (strain Mu3 / ATCC 700698).